The chain runs to 522 residues: Lysine--tRNA ligase (522 aa).

The short motif at 44-52 (PSGLPHIGT) is the 'HIGH' region element. Residues 290–294 (KISKS) carry the 'KMSKS' region motif. An ATP-binding site is contributed by Lys293.

Belongs to the class-I aminoacyl-tRNA synthetase family.

Its subcellular location is the cytoplasm. The enzyme catalyses tRNA(Lys) + L-lysine + ATP = L-lysyl-tRNA(Lys) + AMP + diphosphate. In Rickettsia rickettsii (strain Iowa), this protein is Lysine--tRNA ligase.